Here is a 136-residue protein sequence, read N- to C-terminus: MANFKVVVSDPKEGRAYQIDIKDAEANALIGKAIGDVVDGAIFGLAGYKVQITGGCDGSGFVMKPDLPGPRRQRILTATGVGYVPKLPGQRRRKMMRGKEIAPDIIQVNAKIVEYGSKSIKALLGLETAEEAPAAE.

Belongs to the eukaryotic ribosomal protein eS6 family.

The sequence is that of Small ribosomal subunit protein eS6 from Methanosarcina acetivorans (strain ATCC 35395 / DSM 2834 / JCM 12185 / C2A).